Here is a 66-residue protein sequence, read N- to C-terminus: Phylloseptin-H9 (66 aa).

The signal sequence occupies residues Met1 to Cys22. A propeptide spanning residues Glu23–Glu44 is cleaved from the precursor. Residues Glu24–Glu44 are disordered. Residues Glu30–Lys41 show a composition bias toward acidic residues. Residue Leu65 is modified to Leucine amide.

Expressed by the skin glands.

The protein resides in the secreted. Has antimicrobial activity. This chain is Phylloseptin-H9, found in Pithecopus hypochondrialis (Orange-legged leaf frog).